The chain runs to 72 residues: Small proline-rich protein 2E (72 aa).

Over residues 1 to 11 (MSYQQQQCKQP) the composition is skewed to low complexity. The tract at residues 1–20 (MSYQQQQCKQPCQPPPVCPT) is disordered. 3 consecutive repeat copies span residues 21–29 (PKCPEPCPP), 30–38 (PKCPEPCPP), and 39–47 (PKCPQPCPP). The tract at residues 21–47 (PKCPEPCPPPKCPEPCPPPKCPQPCPP) is 3 X 9 AA tandem repeats of P-K-C-P-[EQ]-P-C-P-P. Positions 42–72 (PQPCPPQQCQQKCPPVTPSPPCQPKCPPKSK) are disordered. The span at 56–72 (PVTPSPPCQPKCPPKSK) shows a compositional bias: pro residues.

The protein belongs to the cornifin (SPRR) family.

It localises to the cytoplasm. In terms of biological role, cross-linked envelope protein of keratinocytes. It is a keratinocyte protein that first appears in the cell cytosol, but ultimately becomes cross-linked to membrane proteins by transglutaminase. All that results in the formation of an insoluble envelope beneath the plasma membrane. This is Small proline-rich protein 2E (SPRR2E) from Homo sapiens (Human).